The chain runs to 97 residues: Small ribosomal subunit protein uS19 (97 aa).

Residues 74–97 (FSPTRRFGGHPDKKAVKGKIEKQG) form a disordered region. Over residues 82-97 (GHPDKKAVKGKIEKQG) the composition is skewed to basic and acidic residues.

It belongs to the universal ribosomal protein uS19 family.

Protein S19 forms a complex with S13 that binds strongly to the 16S ribosomal RNA. The chain is Small ribosomal subunit protein uS19 from Petrotoga mobilis (strain DSM 10674 / SJ95).